Here is a 167-residue protein sequence, read N- to C-terminus: MENIVLIGFMGSGKTTIGREIALLGGRFLLDTDQIIEQNMGKSINEIFESVGESGFRRIESQLILWLSANVKNAVIATGGGMPIYNDVAYLGYVFWLDMSFESILKRLTITEQEKRPLFSDISKARQLYNERKSIYKKQSKYIINGDASALEIARKIIECMDKEVQE.

Residue 8-15 participates in ATP binding; the sequence is GFMGSGKT.

This sequence belongs to the shikimate kinase family.

It is found in the cytoplasm. It carries out the reaction shikimate + ATP = 3-phosphoshikimate + ADP + H(+). The protein operates within metabolic intermediate biosynthesis; chorismate biosynthesis; chorismate from D-erythrose 4-phosphate and phosphoenolpyruvate: step 5/7. The sequence is that of Shikimate kinase from Helicobacter hepaticus (strain ATCC 51449 / 3B1).